We begin with the raw amino-acid sequence, 213 residues long: Ubiquitin-conjugating enzyme E2 S (213 aa).

A UBC core domain is found at 13-159; that stretch reads QIIRQVAKEV…ARMMTEIHAK (147 aa). The active-site Glycyl thioester intermediate is the Cys-97. A disordered region spans residues 157–213; that stretch reads HAKPTTKTAPTKNEETNCPSTSGTQSTSEGPMAKKHAGDKNAAEKKKKEKKRALRRL. Residues 174–185 show a composition bias toward polar residues; that stretch reads CPSTSGTQSTSE. The segment covering 192 to 202 has biased composition (basic and acidic residues); it reads HAGDKNAAEKK. Residues 203 to 213 show a composition bias toward basic residues; sequence KKEKKRALRRL.

This sequence belongs to the ubiquitin-conjugating enzyme family.

The catalysed reaction is S-ubiquitinyl-[E1 ubiquitin-activating enzyme]-L-cysteine + [E2 ubiquitin-conjugating enzyme]-L-cysteine = [E1 ubiquitin-activating enzyme]-L-cysteine + S-ubiquitinyl-[E2 ubiquitin-conjugating enzyme]-L-cysteine.. The protein operates within protein modification; protein ubiquitination. Catalyzes the covalent attachment of ubiquitin to other proteins. Acts as an essential factor of the anaphase promoting complex/cyclosome (APC/C), a cell cycle-regulated ubiquitin ligase that controls progression through mitosis. Acts by specifically elongating polyubiquitin chains initiated by the E2 enzyme UBCH10 on APC/C substrates, enhancing the degradation of APC/C substrates by the proteasome and promoting mitotic exit. This chain is Ubiquitin-conjugating enzyme E2 S, found in Branchiostoma floridae (Florida lancelet).